A 782-amino-acid polypeptide reads, in one-letter code: Protein bicaudal D (782 aa).

A coiled-coil region spans residues 15–77 (VQDLQMEVER…RHELDITQEA (63 aa)). At Ser103 the chain carries Phosphoserine. Positions 107-249 (ETSLNLQIFD…LETLQGEREA (143 aa)) form a coiled coil. Phosphoserine is present on residues Ser285, Ser288, and Ser305. Thr306 is subject to Phosphothreonine. Position 310 is a phosphoserine (Ser310). Coiled-coil stretches lie at residues 320 to 368 (SEIH…FMSR) and 444 to 477 (TTTLRNEVTNLKNKLLATEQKSLDLQSDVQTLTH). The residue at position 528 (Ser528) is a Phosphoserine. Coiled-coil stretches lie at residues 603–630 (EKVNTEEMEELQEQIVKLKSLLSVKREQ) and 695–743 (CEEY…MEMD). An interaction with Rab6 region spans residues 699-722 (VTQVDDLNRQLEAAEEEKKTLNQL). The disordered stretch occupies residues 744–782 (REMRHVRRPMPAQRGTSGKSSFSTRPSSRNPASSNANPF). Over residues 757–767 (RGTSGKSSFST) the composition is skewed to polar residues. Residues 768–782 (RPSSRNPASSNANPF) are compositionally biased toward low complexity.

This sequence belongs to the BicD family. As to quaternary structure, may homodimerize but does not interact with BicDR. Interacts (via C-terminal domain) with Rab6. As to expression, in ovaries, expressed in oocyte and nurse cells.

It is found in the cytoplasm. The protein localises to the cytoskeleton. In terms of biological role, this protein is essential for differentiation. It may play a role in localizing of Nanos (a maternal determinant) activity in oocytes. Functions redundantly with BicDR. During oogenesis, plays a specific role, together with Rab6 but independently of Sec5, in the polarization of the oocyte microtubule cytoskeleton, in oskar mRNA localization and in the anterodorsal secretion of grk. Plays a role in the biogenesis of annulate lamellae containing nuclear pore complex components. During macrochaetae development, together with BicDR, involved in Rab 6 and Spn-F stability and distribution and actin cytoskeleton organization. In Drosophila melanogaster (Fruit fly), this protein is Protein bicaudal D.